Here is a 260-residue protein sequence, read N- to C-terminus: Transcription factor BEE 1 (260 aa).

The disordered stretch occupies residues 118-139 (ETGSLRRGKRLKKKKEEEDEKE). Residues 151-201 (QATDSHSLAERVRRGKINERLRCLQDMVPGCYKAMGMATMLDEIINYVQSL) enclose the bHLH domain.

The protein resides in the nucleus. Positive regulator of brassinosteroid signaling. This Arabidopsis thaliana (Mouse-ear cress) protein is Transcription factor BEE 1 (BEE1).